The following is a 453-amino-acid chain: Bifunctional protein GlmU (453 aa).

The pyrophosphorylase stretch occupies residues 1–231 (MERTCLAVIL…EIEMTGCNTR (231 aa)). Residues 10–13 (LAAG), K24, Q77, 82–83 (GT), 105–107 (YGD), G143, E157, N172, and N229 each bind UDP-N-acetyl-alpha-D-glucosamine. A Mg(2+)-binding site is contributed by D107. N229 is a Mg(2+) binding site. The interval 232–252 (AELAVIERFWQERRRHQLMLS) is linker. The interval 253–453 (GVTMIAPETV…ATKAAKKAKG (201 aa)) is N-acetyltransferase. UDP-N-acetyl-alpha-D-glucosamine-binding residues include R318 and K336. The Proton acceptor role is filled by H348. UDP-N-acetyl-alpha-D-glucosamine is bound by residues Y351 and N362. Acetyl-CoA is bound by residues A365, 371 to 372 (NY), S390, S408, and R425.

The protein in the N-terminal section; belongs to the N-acetylglucosamine-1-phosphate uridyltransferase family. It in the C-terminal section; belongs to the transferase hexapeptide repeat family. Homotrimer. Mg(2+) serves as cofactor.

It localises to the cytoplasm. The enzyme catalyses alpha-D-glucosamine 1-phosphate + acetyl-CoA = N-acetyl-alpha-D-glucosamine 1-phosphate + CoA + H(+). It carries out the reaction N-acetyl-alpha-D-glucosamine 1-phosphate + UTP + H(+) = UDP-N-acetyl-alpha-D-glucosamine + diphosphate. It functions in the pathway nucleotide-sugar biosynthesis; UDP-N-acetyl-alpha-D-glucosamine biosynthesis; N-acetyl-alpha-D-glucosamine 1-phosphate from alpha-D-glucosamine 6-phosphate (route II): step 2/2. It participates in nucleotide-sugar biosynthesis; UDP-N-acetyl-alpha-D-glucosamine biosynthesis; UDP-N-acetyl-alpha-D-glucosamine from N-acetyl-alpha-D-glucosamine 1-phosphate: step 1/1. The protein operates within bacterial outer membrane biogenesis; LPS lipid A biosynthesis. Its function is as follows. Catalyzes the last two sequential reactions in the de novo biosynthetic pathway for UDP-N-acetylglucosamine (UDP-GlcNAc). The C-terminal domain catalyzes the transfer of acetyl group from acetyl coenzyme A to glucosamine-1-phosphate (GlcN-1-P) to produce N-acetylglucosamine-1-phosphate (GlcNAc-1-P), which is converted into UDP-GlcNAc by the transfer of uridine 5-monophosphate (from uridine 5-triphosphate), a reaction catalyzed by the N-terminal domain. The protein is Bifunctional protein GlmU of Rhizobium leguminosarum bv. trifolii (strain WSM2304).